Consider the following 253-residue polypeptide: Ribonuclease HII (253 aa).

Residues Ala-32–Ile-223 form the RNase H type-2 domain. Asp-38, Glu-39, and Asp-130 together coordinate a divalent metal cation.

It belongs to the RNase HII family. The cofactor is Mn(2+). Mg(2+) is required as a cofactor.

The protein localises to the cytoplasm. The catalysed reaction is Endonucleolytic cleavage to 5'-phosphomonoester.. Endonuclease that specifically degrades the RNA of RNA-DNA hybrids. This chain is Ribonuclease HII, found in Chelativorans sp. (strain BNC1).